Consider the following 97-residue polypeptide: Protein MxiI (97 aa).

To S.typhimurium PrgJ.

In terms of biological role, necessary for the secretion of IPA invasins. In Shigella flexneri, this protein is Protein MxiI (mxiI).